The sequence spans 204 residues: Glycerol-3-phosphate acyltransferase (204 aa).

5 helical membrane-spanning segments follow: residues 8–28 (ILIFAYLLGSINSAIIVCYIF), 53–73 (VPAAITLIFDILKGLVPVVIA), 81–101 (FITACTALYAILGHIFPIFFG), 116–136 (FGFSWILGLIFVITWLCVAII), and 155–175 (VIFTSDLQVAAPFLIIAIIIL).

It belongs to the PlsY family. Probably interacts with PlsX.

Its subcellular location is the cell inner membrane. It catalyses the reaction an acyl phosphate + sn-glycerol 3-phosphate = a 1-acyl-sn-glycero-3-phosphate + phosphate. It participates in lipid metabolism; phospholipid metabolism. In terms of biological role, catalyzes the transfer of an acyl group from acyl-phosphate (acyl-PO(4)) to glycerol-3-phosphate (G3P) to form lysophosphatidic acid (LPA). This enzyme utilizes acyl-phosphate as fatty acyl donor, but not acyl-CoA or acyl-ACP. This is Glycerol-3-phosphate acyltransferase from Francisella tularensis subsp. holarctica (strain FTNF002-00 / FTA).